The sequence spans 354 residues: Peripherin-2 (354 aa).

At 1–24 (MALLKVKFNQKKRVKLAQGLWLMN) the chain is on the cytoplasmic side. The chain crosses the membrane as a helical span at residues 25–43 (WFSVFAGIIVFSMGLFLKI). Over 44-61 (ELRKRSEVMDNSESHFVP) the chain is Lumenal. A helical transmembrane segment spans residues 62 to 80 (NSLILMGILSCAFNGFAGK). Residues 81–99 (ICYDSLDPAKFAKWKPLLK) are Cytoplasmic-facing. A helical membrane pass occupies residues 100-123 (PYLALCFFFNILLFFVALICFLMR). Over 124–264 (GSLESTLAQG…LHYYSSMMSS (141 aa)) the chain is Lumenal. N-linked (GlcNAc...) asparagine glycosylation occurs at N229. The helical transmembrane segment at 265–290 (MGAVVLLVWLFEMSVMVGLRLLHTSL) threads the bilayer. The Cytoplasmic segment spans residues 291 to 354 (ESIANPEDPE…GKTPAITTVS (64 aa)). A disordered region spans residues 335–354 (GAEGAEGEEAGKTPAITTVS).

It belongs to the PRPH2/ROM1 family. Homodimer; disulfide-linked.

Its subcellular location is the membrane. May be involved in the morphogenesis of retina outer segment disks and the development and maintenance of the retina ultrastructure. In Gallus gallus (Chicken), this protein is Peripherin-2 (PRPH2).